Here is a 381-residue protein sequence, read N- to C-terminus: GDP-mannose transporter (381 aa).

The Cytoplasmic portion of the chain corresponds to 1–44; sequence MAEGKKTDDYTIQMDSIDQGNKSFEAPPPPQPRSPPSGSLSNNP. A disordered region spans residues 19 to 41; that stretch reads QGNKSFEAPPPPQPRSPPSGSLS. Positions 26–35 are enriched in pro residues; that stretch reads APPPPQPRSP. A helical membrane pass occupies residues 45-65; it reads ILPVLAYCGSSILMTVMNKYV. Over 66–70 the chain is Lumenal; sequence LSGTD. A helical transmembrane segment spans residues 71–91; it reads FNLNFFLLCIQSLVCIIAIQT. The Cytoplasmic segment spans residues 92–109; the sequence is CKSCGLITYRDFSADEAR. The chain crosses the membrane as a helical span at residues 110–126; sequence KWFPITLLLIGMIYTGS. Residues 127 to 133 lie on the Lumenal side of the membrane; that stretch reads KALQFLS. Residues 134 to 150 form a helical membrane-spanning segment; sequence IPVYTIFKNLTIILIAY. Topologically, residues 151 to 159 are cytoplasmic; the sequence is GEVLWFGGS. A helical membrane pass occupies residues 160–181; that stretch reads VTGLTLFSFGLMVLSSIIAAWA. Topologically, residues 182–199 are lumenal; that stretch reads DIKHAVESNGDATAKVST. Residues 200-220 traverse the membrane as a helical segment; that stretch reads LNAGYIWMLVNCLCTSSYVLG. Residues 221–234 are Cytoplasmic-facing; the sequence is MRKRIKLTNFKDFD. Residues 235–255 traverse the membrane as a helical segment; sequence TMFYNNLLSIPVLIVLSAFLE. The Lumenal segment spans residues 256–273; sequence DWSSTNVNRNFPPMDRNS. Residues 274-294 traverse the membrane as a helical segment; that stretch reads IVFAMILSGLSSVFISYTSAW. Residues 295-302 lie on the Cytoplasmic side of the membrane; sequence CVRVTSST. The chain crosses the membrane as a helical span at residues 303–323; sequence TYSMVGALNKLPIAISGLIFF. Over 324-326 the chain is Lumenal; the sequence is DAP. The chain crosses the membrane as a helical span at residues 327–347; the sequence is VTFPSVSAIVVGFVSGIVYAV. At 348-381 the chain is on the cytoplasmic side; it reads AKIKQNAKPRTGVLPTANPPVSASSQSMRDSLRS. Residues 358-381 form a disordered region; sequence TGVLPTANPPVSASSQSMRDSLRS. Over residues 366-381 the composition is skewed to polar residues; the sequence is PPVSASSQSMRDSLRS.

This sequence belongs to the TPT transporter family. SLC35D subfamily. In terms of assembly, homooligomer.

It localises to the golgi apparatus membrane. It is found in the cytoplasmic vesicle membrane. Its subcellular location is the endoplasmic reticulum membrane. In terms of biological role, involved in the import of GDP-mannose from the cytoplasm into the Golgi lumen. The sequence is that of GDP-mannose transporter (gmt1) from Aspergillus niger (strain ATCC MYA-4892 / CBS 513.88 / FGSC A1513).